The sequence spans 188 residues: PRA1 family protein 3 (188 aa).

Met1 carries the N-acetylmethionine modification. Over 1–35 the chain is Cytoplasmic; sequence MDVNIAPLRAWDDFFPGSDRFARPDFRDISKWNNR. 2 consecutive transmembrane segments (helical) span residues 36–56 and 57–77; these read VVSNLLYYQTNYLVVAAMMIS and VVGFLSPFNMILGGIVVVLVF. The Cytoplasmic segment spans residues 78–93; that stretch reads TGFVWAAHNKDILRRL. The next 2 helical transmembrane spans lie at 94 to 114 and 115 to 135; these read KKQYPTVFVMVVMLASYFLIS and MFGGVMVFVFGITFPLLLMFI. Residues 103–117 are required for homodimer formation and heterodimer formation with ARL6IP1; that stretch reads MVVMLASYFLISMFG. The Cytoplasmic portion of the chain corresponds to 136 to 188; sequence HASLRLRNLKNKLENKIEGIGLKRTPMGIVLDALEQQEENISKFADYISKVNE. The tract at residues 136-188 is targeting to endoplasmic reticulum membrane; the sequence is HASLRLRNLKNKLENKIEGIGLKRTPMGIVLDALEQQEENISKFADYISKVNE.

It belongs to the PRA1 family. As to quaternary structure, homodimer. Heterodimer with ARL6IP1. Forms multimers. Interacts with ARL6. Interacts with prenylated RAB1A and RAB3A. Interacts with SLC1A1/EAAC1. Interacts with RTN2 (via first transmembrane domain). Does not interact with VAMP1, VAMP2 or VAMP3.

It is found in the endoplasmic reticulum membrane. The protein resides in the cell membrane. It localises to the cytoplasm. Its subcellular location is the cytoskeleton. Functionally, regulates intracellular concentrations of taurine and glutamate. Negatively modulates SLC1A1/EAAC1 glutamate transport activity by decreasing its affinity for glutamate in a PKC activity-dependent manner. Plays a role in the retention of SLC1A1/EAAC1 in the endoplasmic reticulum. The sequence is that of PRA1 family protein 3 (ARL6IP5) from Sus scrofa (Pig).